A 310-amino-acid polypeptide reads, in one-letter code: Methionyl-tRNA formyltransferase (310 aa).

Position 111-114 (111-114) interacts with (6S)-5,6,7,8-tetrahydrofolate; sequence SILP.

It belongs to the Fmt family.

It carries out the reaction L-methionyl-tRNA(fMet) + (6R)-10-formyltetrahydrofolate = N-formyl-L-methionyl-tRNA(fMet) + (6S)-5,6,7,8-tetrahydrofolate + H(+). Its function is as follows. Attaches a formyl group to the free amino group of methionyl-tRNA(fMet). The formyl group appears to play a dual role in the initiator identity of N-formylmethionyl-tRNA by promoting its recognition by IF2 and preventing the misappropriation of this tRNA by the elongation apparatus. The sequence is that of Methionyl-tRNA formyltransferase from Methylobacterium nodulans (strain LMG 21967 / CNCM I-2342 / ORS 2060).